Here is a 460-residue protein sequence, read N- to C-terminus: uncharacterized protein (460 aa).

Residues 9 to 67 form the TRAM domain; it reads NFKKNDIFEAEVLDLTHEGQGVVKIDSFPFFVDNALPGERIKMHVLKVGKSFGFGRVDE. Residues Gln-292, Tyr-321, Glu-342, and Asp-390 each coordinate S-adenosyl-L-methionine. Residue Cys-417 is the Nucleophile of the active site.

This sequence belongs to the class I-like SAM-binding methyltransferase superfamily. RNA M5U methyltransferase family.

This is an uncharacterized protein from Lactococcus lactis subsp. lactis (strain IL1403) (Streptococcus lactis).